The chain runs to 336 residues: MKTLMRHGLAVCLALTTMCTSLLLVYSSLGGQKERPPQQQQQQQQQQQQASATGSSQPAAESSTQQRPGVPAGPRPLDGYLGVADHKPLKMHCRDCALVTSSGHLLHSRQGSQIDQTECVIRMNDAPTRGYGRDVGNRTSLRVIAHSSIQRILRNRHDLLNVSQGTVFIFWGPSSYMRRDGKGQVYNNLHLLSQVLPRLKAFMITRHKMLQFDELFKQETGKDRKISNTWLSTGWFTMTIALELCDRINVYGMVPPDFCRDPNHPSVPYHYYEPFGPDECTMYLSHERGRKGSHHRFITEKRVFKNWARTFNIHFFQPDWKPESLAINHPENKPVF.

Over 1–8 (MKTLMRHG) the chain is Cytoplasmic. Residues 9-29 (LAVCLALTTMCTSLLLVYSSL) form a helical; Signal-anchor for type II membrane protein membrane-spanning segment. The Lumenal segment spans residues 30-336 (GGQKERPPQQ…INHPENKPVF (307 aa)). The disordered stretch occupies residues 32-81 (QKERPPQQQQQQQQQQQQASATGSSQPAAESSTQQRPGVPAGPRPLDGYL). Low complexity predominate over residues 38-49 (QQQQQQQQQQQQ). The span at 50–67 (ASATGSSQPAAESSTQQR) shows a compositional bias: polar residues. A disulfide bond links Cys-96 and Cys-245. Residues Asn-137 and Asn-161 are each glycosylated (N-linked (GlcNAc...) asparagine).

Belongs to the glycosyltransferase 29 family.

The protein resides in the golgi apparatus membrane. It carries out the reaction a ganglioside GM1b (d18:1(4E)) + CMP-N-acetyl-beta-neuraminate = a ganglioside GD1alpha (d18:1(4E)) + CMP + H(+). It catalyses the reaction N-acetyl-alpha-neuraminosyl-(2-&gt;3)-beta-D-galactosyl-(1-&gt;3)-N-acetyl-beta-D-glucosaminyl-(1-&gt;3)-beta-D-galactosyl-(1-&gt;4)-beta-D-glucosyl-(1&lt;-&gt;1')-N-acyl-sphing-4-enine + CMP-N-acetyl-beta-neuraminate = N-acetyl-alpha-neuraminosyl-(2-&gt;3)-beta-D-galactosyl-(1-&gt;3)-[N-acetyl-alpha-neuraminosyl-(2-&gt;6)]-N-acetyl-beta-D-glucosaminyl-(1-&gt;3)-beta-D-galactosyl-(1-&gt;4)-beta-D-glucosyl-(1&lt;-&gt;1')-N-acyl-sphing-4-enine + CMP + H(+). The protein operates within glycolipid biosynthesis. Predominantly catalyzes the biosynthesis of ganglioside GD1alpha from GM1b in the brain, by transferring the sialyl group (N-acetyl-alpha-neuraminyl or NeuAc) from CMP-NeuAc to the GalNAc residue on the NeuAc-alpha-2,3-Gal-beta-1,3-GalNAc sequence of GM1b. GD1alpha is a critical molecule in the communication and interaction between neuronal cells and their supportive cells, particularly in brain tissues, and functions as an adhesion molecule in the process of metastasis. Also shows activity towards sialyl Lc4Cer (N-acetyl-alpha-neuraminosyl-(2-&gt;3)-beta-D-galactosyl-(1-&gt;3)-N-acetyl-beta-D-glucosaminyl-(1-&gt;3)-beta-D-galactosyl-(1-&gt;4)-beta-D-glucosyl-(1&lt;-&gt;1')-N-acyl-sphing-4-enine) generating disialyl Lc4Cer, which can lead to the synthesis of disialyl Lewis a (Le(a)), suggested to be a cancer-associated antigen. This chain is Alpha-N-acetylgalactosaminide alpha-2,6-sialyltransferase 5 (ST6GALNAC5), found in Homo sapiens (Human).